The primary structure comprises 272 residues: Shikimate dehydrogenase (NADP(+)) (272 aa).

Residues Ser14 to Ser16 and Thr61 each bind shikimate. The Proton acceptor role is filled by Lys65. Glu77 is a binding site for NADP(+). Shikimate-binding residues include Asn86 and Asp102. Residues Gly126–Ala130, Asn149–Arg154, and Met213 each bind NADP(+). Residue Tyr215 participates in shikimate binding. Residue Gly237 coordinates NADP(+).

The protein belongs to the shikimate dehydrogenase family. Homodimer.

The enzyme catalyses shikimate + NADP(+) = 3-dehydroshikimate + NADPH + H(+). Its pathway is metabolic intermediate biosynthesis; chorismate biosynthesis; chorismate from D-erythrose 4-phosphate and phosphoenolpyruvate: step 4/7. Involved in the biosynthesis of the chorismate, which leads to the biosynthesis of aromatic amino acids. Catalyzes the reversible NADPH linked reduction of 3-dehydroshikimate (DHSA) to yield shikimate (SA). The polypeptide is Shikimate dehydrogenase (NADP(+)) (Escherichia coli (strain K12 / MC4100 / BW2952)).